A 294-amino-acid polypeptide reads, in one-letter code: Bifunctional protein FolD (294 aa).

Residues 175–177 and I241 each bind NADP(+); that span reads GAS.

Belongs to the tetrahydrofolate dehydrogenase/cyclohydrolase family. In terms of assembly, homodimer.

The enzyme catalyses (6R)-5,10-methylene-5,6,7,8-tetrahydrofolate + NADP(+) = (6R)-5,10-methenyltetrahydrofolate + NADPH. The catalysed reaction is (6R)-5,10-methenyltetrahydrofolate + H2O = (6R)-10-formyltetrahydrofolate + H(+). Its pathway is one-carbon metabolism; tetrahydrofolate interconversion. In terms of biological role, catalyzes the oxidation of 5,10-methylenetetrahydrofolate to 5,10-methenyltetrahydrofolate and then the hydrolysis of 5,10-methenyltetrahydrofolate to 10-formyltetrahydrofolate. This is Bifunctional protein FolD from Hahella chejuensis (strain KCTC 2396).